A 272-amino-acid polypeptide reads, in one-letter code: Glutamate racemase (272 aa).

Residues Asp-10–Ser-11 and Tyr-42–Gly-43 contribute to the substrate site. The Proton donor/acceptor role is filled by Cys-74. Position 75-76 (Asn-75–Thr-76) interacts with substrate. The active-site Proton donor/acceptor is Cys-185. Residue Thr-186–His-187 participates in substrate binding.

This sequence belongs to the aspartate/glutamate racemases family.

The catalysed reaction is L-glutamate = D-glutamate. Its pathway is cell wall biogenesis; peptidoglycan biosynthesis. In terms of biological role, provides the (R)-glutamate required for cell wall biosynthesis. This chain is Glutamate racemase, found in Bacillus pumilus (strain SAFR-032).